The sequence spans 227 residues: uncharacterized protein (227 aa).

The chain crosses the membrane as a helical span at residues 7–26 (IITLTILIFISGLLTAFLLL).

It is found in the membrane. This is an uncharacterized protein from Haemophilus influenzae (strain ATCC 51907 / DSM 11121 / KW20 / Rd).